The primary structure comprises 240 residues: Large ribosomal subunit protein bL25 (240 aa).

Positions 1-24 (MATVMEFKATARPKSGKGAARAER) are disordered.

It belongs to the bacterial ribosomal protein bL25 family. CTC subfamily. Part of the 50S ribosomal subunit; part of the 5S rRNA/L5/L18/L25 subcomplex. Contacts the 5S rRNA. Binds to the 5S rRNA independently of L5 and L18.

Its function is as follows. This is one of the proteins that binds to the 5S RNA in the ribosome where it forms part of the central protuberance. The protein is Large ribosomal subunit protein bL25 of Rhodopseudomonas palustris (strain HaA2).